The primary structure comprises 312 residues: Lipoyl synthase (312 aa).

[4Fe-4S] cluster-binding residues include Cys51, Cys56, Cys62, Cys77, Cys81, Cys84, and Ser290. The region spanning 63 to 280 (WSRKTATYLA…RTIGTSLGLF (218 aa)) is the Radical SAM core domain.

The protein belongs to the radical SAM superfamily. Lipoyl synthase family. [4Fe-4S] cluster is required as a cofactor.

It localises to the cytoplasm. The enzyme catalyses [[Fe-S] cluster scaffold protein carrying a second [4Fe-4S](2+) cluster] + N(6)-octanoyl-L-lysyl-[protein] + 2 oxidized [2Fe-2S]-[ferredoxin] + 2 S-adenosyl-L-methionine + 4 H(+) = [[Fe-S] cluster scaffold protein] + N(6)-[(R)-dihydrolipoyl]-L-lysyl-[protein] + 4 Fe(3+) + 2 hydrogen sulfide + 2 5'-deoxyadenosine + 2 L-methionine + 2 reduced [2Fe-2S]-[ferredoxin]. It participates in protein modification; protein lipoylation via endogenous pathway; protein N(6)-(lipoyl)lysine from octanoyl-[acyl-carrier-protein]: step 2/2. In terms of biological role, catalyzes the radical-mediated insertion of two sulfur atoms into the C-6 and C-8 positions of the octanoyl moiety bound to the lipoyl domains of lipoate-dependent enzymes, thereby converting the octanoylated domains into lipoylated derivatives. The sequence is that of Lipoyl synthase from Chlamydia caviae (strain ATCC VR-813 / DSM 19441 / 03DC25 / GPIC) (Chlamydophila caviae).